The chain runs to 638 residues: Zinc finger protein 143 (638 aa).

At Met-1 the chain carries N-acetylmethionine. A Glycyl lysine isopeptide (Lys-Gly) (interchain with G-Cter in SUMO2) cross-link involves residue Lys-213. 4 C2H2-type zinc fingers span residues 237-261 (FRCK…ERSH), 267-291 (YQCE…FRTH), 297-321 (YRCS…IRTH), and 327-351 (FKCP…IRTH). At Thr-352 the chain carries Phosphothreonine. 3 consecutive C2H2-type zinc fingers follow at residues 357–381 (YYCT…VRIH), 387–411 (YVCT…HVVH), and 417–440 (YNCN…RTAH). Lys-406 participates in a covalent cross-link: Glycyl lysine isopeptide (Lys-Gly) (interchain with G-Cter in SUMO2).

Belongs to the GLI C2H2-type zinc-finger protein family. In terms of assembly, interacts with CHD8. Forms a complex with HCFC1 and ZNF143.

Its subcellular location is the nucleus. Transcriptional activator. Activates the gene for selenocysteine tRNA (tRNAsec). Binds to the SPH motif of small nuclear RNA (snRNA) gene promoters. Participates in efficient U6 RNA polymerase III transcription via its interaction with CHD8. In complex with HCFC1 and ZNF143, regulates the expression of several genes, including AP2S1, ESCO2, OPHN1, RBL1, UBXN8 and ZNF32. The sequence is that of Zinc finger protein 143 (Znf143) from Mus musculus (Mouse).